The sequence spans 78 residues: Acyl carrier protein (78 aa).

A Carrier domain is found at 2–77 (SDTAERIKKI…DAVSYIDEHK (76 aa)). An O-(pantetheine 4'-phosphoryl)serine modification is found at Ser-37.

The protein belongs to the acyl carrier protein (ACP) family. In terms of processing, 4'-phosphopantetheine is transferred from CoA to a specific serine of apo-ACP by AcpS. This modification is essential for activity because fatty acids are bound in thioester linkage to the sulfhydryl of the prosthetic group.

Its subcellular location is the cytoplasm. It participates in lipid metabolism; fatty acid biosynthesis. Carrier of the growing fatty acid chain in fatty acid biosynthesis. In Zymomonas mobilis subsp. mobilis (strain ATCC 31821 / ZM4 / CP4), this protein is Acyl carrier protein.